A 594-amino-acid chain; its full sequence is Solute carrier family 22 member 14 (594 aa).

The Cytoplasmic portion of the chain corresponds to 1-70; sequence MAGEENFKEE…EFGTFQQRLV (70 aa). Residues 71 to 91 traverse the membrane as a helical segment; the sequence is ALTFIPSIMSAFFMFADHFVF. Residues 92-184 are Extracellular-facing; sequence TAQKPYCNTS…LVCGMETKKD (93 aa). Asn-99, Asn-117, Asn-125, and Asn-150 each carry an N-linked (GlcNAc...) asparagine glycan. A helical membrane pass occupies residues 185-205; that stretch reads TAQIMFMAGLPIGSLIFRLIT. The Cytoplasmic segment spans residues 206 to 210; the sequence is DKMGR. Residues 211–231 traverse the membrane as a helical segment; that stretch reads YPAILLSLLGLIIFGFGTAFM. Topologically, residues 232–235 are extracellular; it reads NSFH. A helical transmembrane segment spans residues 236–256; sequence LYLFFRFGISQSVVGYAISSI. Topologically, residues 257-270 are cytoplasmic; the sequence is SLATEWLVGEHRAH. Residues 271-291 traverse the membrane as a helical segment; that stretch reads AIILGHCFFAVGAVLLTGIAY. The Extracellular portion of the chain corresponds to 292–297; the sequence is SLPHWQ. Residues 298–318 form a helical membrane-spanning segment; the sequence is LLFLVGGILVIPFISYIWILP. The Cytoplasmic segment spans residues 319-379; it reads ESPRWLMMKG…DFCKNRQLCK (61 aa). Residues 380–400 form a helical membrane-spanning segment; sequence VTLVMSCVWFTVSYTYFTLSL. Residues 401 to 408 lie on the Extracellular side of the membrane; it reads RMRELGVS. The helical transmembrane segment at 409–431 threads the bilayer; sequence VHFRHVVPSIMEVPARLCCIFLL. The Cytoplasmic portion of the chain corresponds to 432–437; it reads QQIGRK. Residues 438-458 form a helical membrane-spanning segment; it reads WSLAVTLLQAIIWCLLLLFLP. The Extracellular segment spans residues 459-488; it reads EGEDGLRLKWPRCPATELKSMTILVLMLRE. Residues 489–509 traverse the membrane as a helical segment; the sequence is FSLAATVTVFFLYTAELLPTV. Topologically, residues 510-512 are cytoplasmic; sequence LRA. A helical membrane pass occupies residues 513–533; the sequence is TGLGLVSLASVAGAILSLTII. Topologically, residues 534 to 538 are extracellular; that stretch reads SQTPS. A helical membrane pass occupies residues 539–559; the sequence is LLPIFLCCVLAIVAFSLSSLL. At 560–594 the chain is on the cytoplasmic side; it reads PETRDQPLSESLNHSSQIRNKVKDMKTKETSSDDV. Positions 566-594 are disordered; it reads PLSESLNHSSQIRNKVKDMKTKETSSDDV. The span at 567-578 shows a compositional bias: polar residues; sequence LSESLNHSSQIR. Over residues 580–594 the composition is skewed to basic and acidic residues; the sequence is KVKDMKTKETSSDDV.

This sequence belongs to the major facilitator (TC 2.A.1) superfamily. Organic cation transporter (TC 2.A.1.19) family. In terms of tissue distribution, ubiquitous.

It is found in the mitochondrion inner membrane. The protein localises to the cell projection. It localises to the cilium. Its subcellular location is the flagellum membrane. The enzyme catalyses riboflavin(in) = riboflavin(out). Riboflavin transporter localized at the inner mitochondrial membrane of the spermatozoa midpiece, which is required for male fertility. SLC22A14-mediated riboflavin transport is essential for spermatozoa energy generation and motility: riboflavin is the precursor of FMN and FAD, which are coenzymes of many enzymes in the TCA cycle (the citric acid cycle) in mitochondria. Required for sperm motility and normal sperm flagellar structure. In Homo sapiens (Human), this protein is Solute carrier family 22 member 14.